Consider the following 277-residue polypeptide: MAVAYADKPNHFINFPLTQFEGFVLNYKGLQFQLLDEGVDCKIQTAPHISLAMLDIQPEDYRSVDVAIQEVIDDMHWGEGFQIKFDNPHILGRCIVLDVKGVEELHDDLVNYIRDKGCVADQSRKWIGHCTIAQLTDAALSIKENVDFINSMQFNYKITINPSSPARLEIVKLGAEKKDGFYETIVSHWMGSRFEYNPPTDKLAMIMGYCCSEVVRKELEEGDLPENDDDAWFKLSYHYENNSWFFRHVYRKVLISVSLVNLDCNCLGFYESPVEED.

It belongs to the coronaviruses ns2a protein family.

The chain is Non-structural protein 2a from Bovine coronavirus (strain Quebec) (BCoV).